The primary structure comprises 492 residues: Aspartyl/glutamyl-tRNA(Asn/Gln) amidotransferase subunit B (492 aa).

The protein belongs to the GatB/GatE family. GatB subfamily. In terms of assembly, heterotrimer of A, B and C subunits.

The catalysed reaction is L-glutamyl-tRNA(Gln) + L-glutamine + ATP + H2O = L-glutaminyl-tRNA(Gln) + L-glutamate + ADP + phosphate + H(+). It carries out the reaction L-aspartyl-tRNA(Asn) + L-glutamine + ATP + H2O = L-asparaginyl-tRNA(Asn) + L-glutamate + ADP + phosphate + 2 H(+). Allows the formation of correctly charged Asn-tRNA(Asn) or Gln-tRNA(Gln) through the transamidation of misacylated Asp-tRNA(Asn) or Glu-tRNA(Gln) in organisms which lack either or both of asparaginyl-tRNA or glutaminyl-tRNA synthetases. The reaction takes place in the presence of glutamine and ATP through an activated phospho-Asp-tRNA(Asn) or phospho-Glu-tRNA(Gln). The polypeptide is Aspartyl/glutamyl-tRNA(Asn/Gln) amidotransferase subunit B (Azorhizobium caulinodans (strain ATCC 43989 / DSM 5975 / JCM 20966 / LMG 6465 / NBRC 14845 / NCIMB 13405 / ORS 571)).